Reading from the N-terminus, the 182-residue chain is Mu-like prophage FluMu protein gp45 (182 aa).

The segment at T159–P182 is disordered. Over residues K169–P182 the composition is skewed to basic and acidic residues.

To phage Mu protein gp45.

This is Mu-like prophage FluMu protein gp45 from Haemophilus influenzae (strain ATCC 51907 / DSM 11121 / KW20 / Rd).